The following is a 438-amino-acid chain: Aflatoxin cluster transcriptional coactivator aflS (438 aa).

Residues 65-134 (LALYNQLLAC…PSPGHVAHSV (70 aa)) enclose the HTH iclR-type domain. Residues 95–114 (FEDVADIAGVPECRLRRLVR) constitute a DNA-binding region (H-T-H motif).

As to quaternary structure, interacts with aflR.

Its subcellular location is the nucleus. In terms of biological role, transcription factor; part of the gene cluster that mediates the biosynthesis of aflatoxin, a polyketide-derived furanocoumarin which is part of the most toxic and carcinogenic compounds among the known mycotoxins. AflS exhibits no DNA-binding capability on its own, but forms a complex with the other aflatoxin cluster transcription factor aflR and acts as a modulator of aflR's DNA-binding by decreasing its DNA-binding affinity. The chain is Aflatoxin cluster transcriptional coactivator aflS from Aspergillus flavus (strain ATCC 200026 / FGSC A1120 / IAM 13836 / NRRL 3357 / JCM 12722 / SRRC 167).